The sequence spans 413 residues: 4-hydroxy-3-methylbut-2-en-1-yl diphosphate synthase (flavodoxin) (413 aa).

C305, C308, C351, and E358 together coordinate [4Fe-4S] cluster.

This sequence belongs to the IspG family. [4Fe-4S] cluster is required as a cofactor.

The catalysed reaction is (2E)-4-hydroxy-3-methylbut-2-enyl diphosphate + oxidized [flavodoxin] + H2O + 2 H(+) = 2-C-methyl-D-erythritol 2,4-cyclic diphosphate + reduced [flavodoxin]. It functions in the pathway isoprenoid biosynthesis; isopentenyl diphosphate biosynthesis via DXP pathway; isopentenyl diphosphate from 1-deoxy-D-xylulose 5-phosphate: step 5/6. In terms of biological role, converts 2C-methyl-D-erythritol 2,4-cyclodiphosphate (ME-2,4cPP) into 1-hydroxy-2-methyl-2-(E)-butenyl 4-diphosphate. The protein is 4-hydroxy-3-methylbut-2-en-1-yl diphosphate synthase (flavodoxin) of Bartonella tribocorum (strain CIP 105476 / IBS 506).